Consider the following 261-residue polypeptide: CD40 ligand (261 aa).

At 1-22 the chain is on the cytoplasmic side; that stretch reads MIETYNQPSPRSAATGLPVRMK. Residues 23–43 form a helical; Signal-anchor for type II membrane protein membrane-spanning segment; that stretch reads IFMYLLTIFLITQMIGSALFA. Over 44–261 the chain is Extracellular; it reads VYLHRRLDKI…GFTSFGLLKL (218 aa). The region spanning 122–261 is the THD domain; the sequence is IAAHVISEAS…GFTSFGLLKL (140 aa). A disulfide bond links cysteine 178 and cysteine 218. N-linked (GlcNAc...) asparagine glycosylation occurs at asparagine 240.

This sequence belongs to the tumor necrosis factor family. As to quaternary structure, homotrimer. Interacts with CD28. CD40 ligand, soluble form: Exists as either a monomer or a homotrimer. Forms a ternary complex between CD40 and integrins for CD40-CD40LG signaling. The soluble form derives from the membrane form by proteolytic processing.

The protein resides in the cell membrane. Its subcellular location is the cell surface. The protein localises to the secreted. Functionally, cytokine that acts as a ligand to CD40/TNFRSF5. Costimulates T-cell proliferation and cytokine production. Its cross-linking on T-cells generates a costimulatory signal which enhances the production of IL4 and IL10 in conjunction with the TCR/CD3 ligation and CD28 costimulation. Induces the activation of NF-kappa-B. Induces the activation of kinases MAPK8 and PAK2 in T-cells. Mediates B-cell proliferation in the absence of co-stimulus as well as IgE production in the presence of IL4. Involved in immunoglobulin class switching. Acts as a ligand for integrins, specifically ITGA5:ITGB1 and ITGAV:ITGB3; both integrins and the CD40 receptor are required for activation of CD40-CD40LG signaling, which have cell-type dependent effects, such as B-cell activation, NF-kappa-B signaling and anti-apoptotic signaling. In Cercocebus atys (Sooty mangabey), this protein is CD40 ligand (CD40LG).